An 863-amino-acid chain; its full sequence is Protein translocase subunit SecA (863 aa).

ATP contacts are provided by residues Q88, 106-110, and D496; that span reads GEGKT. Positions 818-842 are disordered; sequence EVKTEPVITKKKPARNEPCPCGSGK. 4 residues coordinate Zn(2+): C836, C838, C847, and C848.

The protein belongs to the SecA family. As to quaternary structure, monomer and homodimer. Part of the essential Sec protein translocation apparatus which comprises SecA, SecYEG and auxiliary proteins SecDF-YajC and YidC. Zn(2+) serves as cofactor.

The protein localises to the cell inner membrane. It localises to the cytoplasm. The enzyme catalyses ATP + H2O + cellular proteinSide 1 = ADP + phosphate + cellular proteinSide 2.. Its function is as follows. Part of the Sec protein translocase complex. Interacts with the SecYEG preprotein conducting channel. Has a central role in coupling the hydrolysis of ATP to the transfer of proteins into and across the cell membrane, serving as an ATP-driven molecular motor driving the stepwise translocation of polypeptide chains across the membrane. The protein is Protein translocase subunit SecA of Nitratiruptor sp. (strain SB155-2).